A 145-amino-acid polypeptide reads, in one-letter code: MIALIQRVSRASVTVDGEITGAIDQGLLVLLGVEQHDDRTKLEKLAHKVMNYRVFSDENGKMNLNVSQVGGSLLVVSQFTLAADTGRGLRPSFSGAGTPEQAERLYDEFVAHCRAQGVPTQTGRFAADMKVELLNDGPVTFHLQV.

The short motif at 137–138 (GP) is the Gly-cisPro motif, important for rejection of L-amino acids element.

It belongs to the DTD family. In terms of assembly, homodimer.

The protein resides in the cytoplasm. It catalyses the reaction glycyl-tRNA(Ala) + H2O = tRNA(Ala) + glycine + H(+). The enzyme catalyses a D-aminoacyl-tRNA + H2O = a tRNA + a D-alpha-amino acid + H(+). In terms of biological role, an aminoacyl-tRNA editing enzyme that deacylates mischarged D-aminoacyl-tRNAs. Also deacylates mischarged glycyl-tRNA(Ala), protecting cells against glycine mischarging by AlaRS. Acts via tRNA-based rather than protein-based catalysis; rejects L-amino acids rather than detecting D-amino acids in the active site. By recycling D-aminoacyl-tRNA to D-amino acids and free tRNA molecules, this enzyme counteracts the toxicity associated with the formation of D-aminoacyl-tRNA entities in vivo and helps enforce protein L-homochirality. In Shewanella amazonensis (strain ATCC BAA-1098 / SB2B), this protein is D-aminoacyl-tRNA deacylase.